Consider the following 264-residue polypeptide: Thymidylate synthase (264 aa).

Arginine 21 contributes to the dUMP binding site. Histidine 51 is a (6R)-5,10-methylene-5,6,7,8-tetrahydrofolate binding site. 126–127 (RR) is a dUMP binding site. Residue cysteine 146 is the Nucleophile of the active site. DUMP is bound by residues 166-169 (RSCD), asparagine 177, and 207-209 (HLY). (6R)-5,10-methylene-5,6,7,8-tetrahydrofolate is bound at residue aspartate 169. Residue alanine 263 coordinates (6R)-5,10-methylene-5,6,7,8-tetrahydrofolate.

The protein belongs to the thymidylate synthase family. Bacterial-type ThyA subfamily. In terms of assembly, homodimer.

Its subcellular location is the cytoplasm. It carries out the reaction dUMP + (6R)-5,10-methylene-5,6,7,8-tetrahydrofolate = 7,8-dihydrofolate + dTMP. It participates in pyrimidine metabolism; dTTP biosynthesis. Its function is as follows. Catalyzes the reductive methylation of 2'-deoxyuridine-5'-monophosphate (dUMP) to 2'-deoxythymidine-5'-monophosphate (dTMP) while utilizing 5,10-methylenetetrahydrofolate (mTHF) as the methyl donor and reductant in the reaction, yielding dihydrofolate (DHF) as a by-product. This enzymatic reaction provides an intracellular de novo source of dTMP, an essential precursor for DNA biosynthesis. This Shewanella denitrificans (strain OS217 / ATCC BAA-1090 / DSM 15013) protein is Thymidylate synthase.